We begin with the raw amino-acid sequence, 369 residues long: Chaperone protein DnaJ (369 aa).

The 66-residue stretch at 4-69 (SYYEILEVEK…KKRALYDRYG (66 aa)) folds into the J domain. The CR-type zinc-finger motif lies at 130-207 (GCKKTIKAQY…CKGKTYILKD (78 aa)). 8 residues coordinate Zn(2+): cysteine 143, cysteine 146, cysteine 159, cysteine 162, cysteine 181, cysteine 184, cysteine 195, and cysteine 198. CXXCXGXG motif repeat units lie at residues 143-150 (CESCDGTG), 159-166 (CKQCNGQG), 181-188 (CGACQGKG), and 195-202 (CQACKGKT).

It belongs to the DnaJ family. As to quaternary structure, homodimer. Zn(2+) is required as a cofactor.

The protein resides in the cytoplasm. Functionally, participates actively in the response to hyperosmotic and heat shock by preventing the aggregation of stress-denatured proteins and by disaggregating proteins, also in an autonomous, DnaK-independent fashion. Unfolded proteins bind initially to DnaJ; upon interaction with the DnaJ-bound protein, DnaK hydrolyzes its bound ATP, resulting in the formation of a stable complex. GrpE releases ADP from DnaK; ATP binding to DnaK triggers the release of the substrate protein, thus completing the reaction cycle. Several rounds of ATP-dependent interactions between DnaJ, DnaK and GrpE are required for fully efficient folding. Also involved, together with DnaK and GrpE, in the DNA replication of plasmids through activation of initiation proteins. This Helicobacter pylori (strain J99 / ATCC 700824) (Campylobacter pylori J99) protein is Chaperone protein DnaJ.